Here is a 521-residue protein sequence, read N- to C-terminus: MSNQLPIHDDLIVYMMQFLDDCSKRKFISTCRFLLELQSRIYYDDEVYVYNEVQHLSYSEFFKRLYYYAGIISSNINFIPQNIEYLQIYRDVSIEDLFEKNAEKLGSIKYLDIDEIDTGKINKLKNNPNSIKTLFVSNEQNILNLLIPSINKLYIHYHSNLDLNLSFSKLTRITFHIGFNKSTDFMFPESLEYLDLGDKFNTPLTPNSLPKNLKHLYLGYKYNYPIENCLPYGLKHLIFGHLFTQKIKNAIPETVTHLCMGGRFYRKVKGYLPKNLIHLEFGWGFNKPLLGEIPNVEYLKTGSSFEYPICDDSNPSKITHLIVGSKINKSDYVLPRNLKTLILDLDYDDPTILFKIPNSVTNLVIVNSTSIDLGSFDLNCYDHVTHLTLNTFVKGSLKYFHNVDTLILDQYFSTSLHNFLPNNLKHLYIENEIYKKQKQFIETNVIIHTFKSSWFSETEDKFLSKFWYGESKYDFIDKIIEYHKKYDNNKFIQKPLVESIIPIKQNSNHDCGLYCPFSKDY.

FNIP repeat units lie at residues 179-221 and 222-263; these read FNKS…LGYK and YNYP…MGGR.

The protein is Putative FNIP repeat-containing protein L162 of Acanthamoeba polyphaga mimivirus (APMV).